We begin with the raw amino-acid sequence, 1436 residues long: Probable ATP-dependent RNA helicase spindle-E (1436 aa).

One can recognise a Helicase ATP-binding domain in the interval 124-291; sequence LAAINANPVV…FTTTNSIPPV (168 aa). 137–144 is a binding site for ATP; the sequence is GETGCGKT. The DEAH box signature appears at 237–240; sequence DEVH. The region spanning 337–524 is the Helicase C-terminal domain; that stretch reads KIIMVIDNME…NSVLRAKELE (188 aa). Residues 940-1003 form the Tudor domain; that stretch reads ACDISKGMMV…RFMSEELIQQ (64 aa).

It belongs to the DEAD box helicase family. DEAH subfamily.

Its subcellular location is the cytoplasm. The enzyme catalyses ATP + H2O = ADP + phosphate + H(+). Probable ATP-binding RNA helicase which plays a central role during spermatogenesis and oogenesis by repressing transposable elements and preventing their mobilization, which is essential for the germline integrity. Acts via the piRNA metabolic process, which mediates the repression of transposable elements during meiosis by forming complexes composed of piRNAs and Piwi and govern the methylation and subsequent repression of transposons. Involved in the repression of LTR retrotransposon copia. Also involved in telomere regulation by repressing specialized telomeric retroelements HeT-A, TAHRE, and TART; Drosophila telomeres being maintained by transposition of specialized telomeric retroelements. Involved in telomeric trans-silencing, a repression mechanism by which a transposon or a transgene inserted in subtelomeric heterochromatin has the capacity to repress in trans in the female germline, a homologous transposon, or transgene located in euchromatin. Involved in the repression of testis-expressed Stellate genes by the homologous Su(Ste) repeats. Required for anteroposterior and dorsoventral axis formation during oogenesis. The polypeptide is Probable ATP-dependent RNA helicase spindle-E (spn-E) (Drosophila yakuba (Fruit fly)).